We begin with the raw amino-acid sequence, 197 residues long: Predicted GPI-anchored protein 34 (197 aa).

The N-terminal stretch at 1–20 (MKFTSLICSSILLIIPTVMA) is a signal peptide. 3 N-linked (GlcNAc...) asparagine glycosylation sites follow: asparagine 110, asparagine 114, and asparagine 152. A lipid anchor (GPI-anchor amidated glycine) is attached at glycine 169. A propeptide spans 170–197 (AAAMAGPVPILTNSIFTAGLLALAAVLL) (removed in mature form).

The protein localises to the cell membrane. Functionally, predicted GPI-anchored protein which may have a role during host infection. This chain is Predicted GPI-anchored protein 34 (PGA34), found in Candida albicans (strain SC5314 / ATCC MYA-2876) (Yeast).